The following is a 91-amino-acid chain: Protein transport protein sft1 (91 aa).

The Cytoplasmic segment spans residues 1 to 68 (MNDQNERRLE…RVVRSAGRRR (68 aa)). The helical; Anchor for type IV membrane protein transmembrane segment at 69–86 (IMTMVLAIVGSILIIYYA) threads the bilayer. The Lumenal portion of the chain corresponds to 87–91 (SKWFF).

As to quaternary structure, component of a SNARE complex consisting of sed5, gos1, ykt6 and sft1.

The protein resides in the golgi apparatus membrane. Its function is as follows. Vesicle SNARE required for retrograde transport within the Golgi complex. In Schizosaccharomyces pombe (strain 972 / ATCC 24843) (Fission yeast), this protein is Protein transport protein sft1 (sft1).